The following is a 421-amino-acid chain: MRAKSHRYPESSECYTDTTYYDPEDKYLDIGFQMLKSINIKRYPEFSYLEKLFINNNNLKQLPDPQYLPKIKELVCSYNILTHIPFYPNLIKLDISHNQVQNINVYNQSKLLYLDCSFNKNIETRIFLPECRELYVNDANISKLEINYFPNLRILDCSNNNISRISSLSSLIELNIQNNHITELPSYPQLVRIMADNNKLCYVPTFPNLLSLSVSYNNIVKITDQPLLKKLVANNNSVIELGNLPKLKFFDLSFNKLNSVTIPSSAKYIFLQFNNFVSVDIDNCIGCVKELQVDFNIYSRIYSKYFDNIYAINIQTNRDKLHYYLQQYSQLSNEHIVNQILNKFNGIKFKEHTKKLFGISVGLYELIFVSQTIKNTSDKESYDKYFQSVLQTDYFKKFYEFIQYVYYNSIIVTLYFNGYIS.

7 LRR repeats span residues 48–69 (YLEK…QYLP), 70–85 (KIKE…THIP), 89–110 (NLIK…NQSK), 111–129 (LLYL…IFLP), 130–150 (ECRE…NYFP), 151–172 (NLRI…SSLI), and 173–191 (ELNI…PQLV).

The protein is Putative leucine-rich repeat protein R380 of Acanthamoeba polyphaga (Amoeba).